A 455-amino-acid polypeptide reads, in one-letter code: Argininosuccinate lyase (455 aa).

Belongs to the lyase 1 family. Argininosuccinate lyase subfamily.

The protein localises to the cytoplasm. The catalysed reaction is 2-(N(omega)-L-arginino)succinate = fumarate + L-arginine. Its pathway is amino-acid biosynthesis; L-arginine biosynthesis; L-arginine from L-ornithine and carbamoyl phosphate: step 3/3. In Shewanella baltica (strain OS195), this protein is Argininosuccinate lyase.